We begin with the raw amino-acid sequence, 183 residues long: UPF0340 protein LCA_1354 (183 aa).

Belongs to the UPF0340 family.

In Latilactobacillus sakei subsp. sakei (strain 23K) (Lactobacillus sakei subsp. sakei), this protein is UPF0340 protein LCA_1354.